Reading from the N-terminus, the 336-residue chain is 7,8-didemethyl-8-hydroxy-5-deazariboflavin synthase (336 aa).

The Radical SAM core domain maps to 18–249; sequence ITYSPAYTLV…TSIAIQVPPN (232 aa). Residues Cys32, Cys36, and Cys39 each coordinate [4Fe-4S] cluster.

This sequence belongs to the radical SAM superfamily. CofG family. As to quaternary structure, consists of two subunits, CofG and CofH. [4Fe-4S] cluster serves as cofactor.

The catalysed reaction is 5-amino-5-(4-hydroxybenzyl)-6-(D-ribitylimino)-5,6-dihydrouracil + S-adenosyl-L-methionine = 7,8-didemethyl-8-hydroxy-5-deazariboflavin + 5'-deoxyadenosine + L-methionine + NH4(+) + H(+). It functions in the pathway cofactor biosynthesis; coenzyme F0 biosynthesis. Functionally, catalyzes the radical-mediated synthesis of 7,8-didemethyl-8-hydroxy-5-deazariboflavin from 5-amino-5-(4-hydroxybenzyl)-6-(D-ribitylimino)-5,6-dihydrouracil. The protein is 7,8-didemethyl-8-hydroxy-5-deazariboflavin synthase of Synechococcus elongatus (strain ATCC 33912 / PCC 7942 / FACHB-805) (Anacystis nidulans R2).